Here is a 953-residue protein sequence, read N- to C-terminus: Ribonuclease E (953 aa).

Disordered regions lie at residues 1–23 (MIDG…PDRL) and 118–314 (VAPQ…RRRP). A compositionally biased stretch (basic and acidic residues) spans 14–23 (SQHEELPDRL). The span at 127–150 (LADDEDVDDGPDYVADDSDADDEG) shows a compositional bias: acidic residues. Basic residues predominate over residues 157 to 169 (NRRRRRGRRGRGR). A compositionally biased stretch (polar residues) spans 183-193 (DQQSEPRAQQF). Acidic residues predominate over residues 199–223 (AETDDGDDRDSEDTEAGDNGEDENG). The segment covering 230–240 (RRRRRRRRRKS) has biased composition (basic residues). Basic and acidic residues-rich tracts occupy residues 263–272 (VHERVPRAGD) and 294–311 (TRLE…DAGR). One can recognise an S1 motif domain in the interval 376 to 453 (GNIYLGIVQN…GHKGARLTTQ (78 aa)). Mg(2+) is bound by residues Asp-647 and Asp-691. Positions 749 and 752 each coordinate Zn(2+). 2 disordered regions span residues 766–808 (SAAA…APGE) and 822–953 (LAGR…IRLD). The segment covering 848–915 (DLDDTAQADF…DADVDEEDAA (68 aa)) has biased composition (acidic residues).

This sequence belongs to the RNase E/G family. Assembles into a homotetramer formed by a dimer of dimers. Interacts with DNA-binding protein HU (hupB). Requires Mg(2+) as cofactor. It depends on Zn(2+) as a cofactor.

It localises to the cytoplasm. It catalyses the reaction Endonucleolytic cleavage of single-stranded RNA in A- and U-rich regions.. In terms of biological role, endoribonuclease that plays a central role in RNA processing and decay. Plays a major role in pre-16S rRNA maturation, probably generating the mature 5'-end, and a minor role in pre-5S and pre-23S rRNA maturation. Probably also processes tRNA. RNase E and HupB jointly contribute to cellular adaptation to changing growth conditions and survival during antibiotic treatment and in the host. The protein is Ribonuclease E of Mycobacterium tuberculosis (strain ATCC 25618 / H37Rv).